The primary structure comprises 669 residues: Collagen alpha-1(II) chain (669 aa).

Residues proline 3 and proline 12 each carry the 4-hydroxyproline modification. A compositionally biased stretch (low complexity) spans residue 318–proline 327. 3 disordered regions span residues residue 318–residue 360, residue 405–residue 438, and residue 638–arginine 669. 4-hydroxyproline occurs at positions 336 and 345. 2 stretches are compositionally biased toward low complexity: residues alanine 339–residue 360 and residue 405–proline 420. Residue proline 413 is modified to 3-hydroxyproline. Residues proline 414, proline 420, and proline 426 each carry the 4-hydroxyproline modification. Composition is skewed to low complexity over residues alanine 429 to residue 438 and residue 638 to leucine 647. Proline 648 bears the 4-hydroxyproline mark. Proline 650 carries the 3-hydroxyproline modification.

This sequence belongs to the fibrillar collagen family. As to quaternary structure, homotrimers of alpha 1(II) chains. Contains mostly 4-hydroxyproline. Prolines at the third position of the tripeptide repeating unit (G-X-P) are 4-hydroxylated in some or all of the chains. Post-translationally, contains 3-hydroxyproline at a few sites. This modification occurs on the first proline residue in the sequence motif Gly-Pro-Hyp, where Hyp is 4-hydroxyproline.

Its subcellular location is the secreted. The protein resides in the extracellular space. It localises to the extracellular matrix. Functionally, type II collagen is specific for cartilaginous tissues. It is essential for the normal embryonic development of the skeleton, for linear growth and for the ability of cartilage to resist compressive forces. This Mammut americanum (American mastodon) protein is Collagen alpha-1(II) chain.